Consider the following 504-residue polypeptide: Patatin-like phospholipase domain-containing protein 2 (504 aa).

Topologically, residues 1–8 (MFPREKTW) are cytoplasmic. A helical membrane pass occupies residues 9 to 29 (NISFAGCGFLGVYYVGVASCL). Residues 10–179 (ISFAGCGFLG…SDNLPLYELK (170 aa)) form the PNPLA domain. Residues 14 to 19 (GCGFLG) carry the GXGXXG motif. Topologically, residues 30-42 (REHAPFLVANATH) are extracellular. Asn-39 carries N-linked (GlcNAc...) asparagine glycosylation. Residues 43-63 (IYGASAGALTATALVTGVCLG) traverse the membrane as a helical segment. Residues 45-49 (GASAG) carry the GXSXG motif. Residue Ser-47 is the Nucleophile of the active site. Over 64–137 (EAGAKFIEVS…IISHFNSKDE (74 aa)) the chain is Cytoplasmic. A Glycyl lysine isopeptide (Lys-Gly) (interchain with G-Cter in ubiquitin) cross-link involves residue Lys-92. The helical transmembrane segment at 138–158 (LIQANVCSGFIPVYCGLIPPS) threads the bilayer. Residues 159 to 329 (LQGVRYVDGG…TTLSNMLPVR (171 aa)) are Extracellular-facing. Residue Asp-166 is the Proton acceptor of the active site. Positions 166–168 (DGG) match the DGA/G motif. A helical membrane pass occupies residues 330–350 (LATAMMVPYTLPLESALSFTI). Over 351–504 (RLLEWLPDVP…ARPVIGALGL (154 aa)) the chain is Cytoplasmic. The residue at position 372 (Ser-372) is a Phosphoserine; in vitro. Ser-404 bears the Phosphoserine; by PKA and FAM20C mark. Ser-428 is subject to Phosphoserine. Residues 463–492 (APADPAPAPADPASPQHQLAGPAPLLSTPA) are disordered.

As to quaternary structure, interacts with ABHD5; this association stimulates PNPLA2 triglyceride hydrolase activity. Interacts with SERPINF1; this interaction stimulates the phospholipase A2 activity of PNPLA2. Despite a colocalization in lipid droplets, it probably does not interact with PLIN. Interacts with PLIN5; prevents interaction with ABHD5. Interacts with FAF2. Phosphorylation at Ser-404 by PKA is increased during fasting and moderate intensity exercise, and moderately increases lipolytic activity. Phosphorylation at Ser-404 is increased upon beta-adrenergic stimulation. In terms of processing, ubiquitinated by PEX2 in response to reactive oxygen species (ROS), leading to its degradation. Ubiquitination is stimulated by LDAH. In terms of tissue distribution, highest expression in adipose tissue. Also detected in heart, skeletal muscle, and portions of the gastrointestinal tract. Detected in normal retina and retinoblastoma cells. Detected in retinal pigment epithelium and, at lower intensity, in the inner segments of photoreceptors and in the ganglion cell layer of the neural retina (at protein level).

Its subcellular location is the lipid droplet. The protein localises to the cell membrane. It localises to the cytoplasm. It carries out the reaction a triacylglycerol + H2O = a diacylglycerol + a fatty acid + H(+). The catalysed reaction is a triacylglycerol + H2O = a 1,2-diacylglycerol + a fatty acid + H(+). The enzyme catalyses a triacylglycerol + H2O = a 1,3-diacylglycerol + a fatty acid + H(+). It catalyses the reaction a triacyl-sn-glycerol + H2O = a 1,3-diacyl-sn-glycerol + a fatty acid + H(+). It carries out the reaction a triacyl-sn-glycerol + H2O = a 2,3-diacyl-sn-glycerol + a fatty acid + H(+). The catalysed reaction is a 1-acylglycerol + a 1,3-diacylglycerol = a triacylglycerol + glycerol. The enzyme catalyses a 1-acylglycerol + a 1,2-diacylglycerol = a triacylglycerol + glycerol. It catalyses the reaction 2 a 1-acylglycerol = a 1,2-diacylglycerol + glycerol. It carries out the reaction a triacylglycerol + all-trans-retinol = an all-trans-retinyl ester + a diacylglycerol. The catalysed reaction is 1,2-di-(9Z-octadecenoyl)-glycerol + (9Z)-octadecenoate + H(+) = 1,2,3-tri-(9Z-octadecenoyl)-glycerol + H2O. The enzyme catalyses 1,2,3-tri-(9Z-octadecenoyl)-glycerol + H2O = 1,3-di-(9Z-octadecenoyl)-glycerol + (9Z)-octadecenoate + H(+). It catalyses the reaction 1-(9Z-octadecenoyl)-glycerol + 1,3-di-(9Z-octadecenoyl)-glycerol = 1,2,3-tri-(9Z-octadecenoyl)-glycerol + glycerol. It carries out the reaction 1-(9Z-octadecenoyl)-glycerol + 1,2-di-(9Z-octadecenoyl)-glycerol = 1,2,3-tri-(9Z-octadecenoyl)-glycerol + glycerol. The catalysed reaction is 2 1-(9Z-octadecenoyl)-glycerol = 1,2-di-(9Z-octadecenoyl)-glycerol + glycerol. The enzyme catalyses 1,2,3-tri-(9Z-octadecenoyl)-glycerol + all-trans-retinol = all-trans-retinyl 9Z-octadecenoate + di-(9Z)-octadecenoylglycerol. It catalyses the reaction 1,2,3-tri-(9Z)-hexadecenoylglycerol + H2O = 1,3-di-(9Z)-hexadecenoylglycerol + (9Z)-hexadecenoate + H(+). It carries out the reaction 1,2,3-tri-(9Z,12Z)-octadecadienoylglycerol + H2O = 1,3-di-(9Z,12Z)-octadecadienoylglycerol + (9Z,12Z)-octadecadienoate + H(+). The catalysed reaction is 1,2,3-tri-(9Z,12Z,15Z)-octadecatrienoylglycerol + H2O = 1,3-di-(9Z,12Z,15Z)-octadecatrienoylglycerol + (9Z,12Z,15Z)-octadecatrienoate + H(+). The enzyme catalyses 1,3-di-(9Z)-octadecenoyl-2-hexadecanoylglycerol + H2O = 1,3-di-(9Z-octadecenoyl)-glycerol + hexadecanoate + H(+). It catalyses the reaction 1,2-di-(9Z)-octadecenoyl-3-hexadecanoyl-sn-glycerol + H2O = 1-(9Z)-octadecenoyl-3-hexadecanoyl-sn-glycerol + (9Z)-octadecenoate + H(+). It carries out the reaction 1-hexadecanoyl-2,3-di-(9Z)-octadecenoyl-sn-glycerol + H2O = 1-hexadecanoyl-3-(9Z)-octadecenoyl-sn-glycerol + (9Z)-octadecenoate + H(+). The catalysed reaction is 1,2,3-tri-(9Z-octadecenoyl)-glycerol + H2O = 2,3-di-(9Z)-octadecenoyl-sn-glycerol + (9Z)-octadecenoate + H(+). The enzyme catalyses 1,2,3-tri-(9Z)-hexadecenoylglycerol + H2O = 2,3-di-(9Z)-hexadecenoyl-sn-glycerol + (9Z)-hexadecenoate + H(+). It catalyses the reaction 1,2,3-tri-(9Z,12Z)-octadecadienoylglycerol + H2O = 2,3-di-(9Z,12Z)-octadecadienoyl-sn-glycerol + (9Z,12Z)-octadecadienoate + H(+). It carries out the reaction 1,2,3-tri-(9Z,12Z,15Z)-octadecatrienoylglycerol + H2O = 2,3-di-(9Z,12Z,15Z)-octadecatrienoyl-sn-glycerol + (9Z,12Z,15Z)-octadecatrienoate + H(+). The catalysed reaction is 1,3-di-(9Z)-octadecenoyl-2-hexadecanoylglycerol + H2O = 2-hexadecanoyl-3-(9Z)-octadecenoyl-sn-glycerol + (9Z)-octadecenoate + H(+). The enzyme catalyses 1-hexadecanoyl-2,3-di-(9Z)-octadecenoyl-sn-glycerol + H2O = 2,3-di-(9Z)-octadecenoyl-sn-glycerol + hexadecanoate + H(+). It catalyses the reaction 1,2-di-(9Z)-octadecenoyl-3-hexadecanoyl-sn-glycerol + H2O = 2-(9Z-octadecenoyl)-3-hexadecanoyl-sn-glycerol + (9Z)-octadecenoate + H(+). It carries out the reaction a 1,2-diacyl-sn-glycero-3-phosphocholine + H2O = a 1-acyl-sn-glycero-3-phosphocholine + a fatty acid + H(+). The catalysed reaction is 1,2,3-tri-(9Z-octadecenoyl)-glycerol + 9-hydroxy-octadecanoate = 9-(9Z-octadecenoyloxy)-octadecanoate + 2,3-di-(9Z)-octadecenoyl-sn-glycerol. The enzyme catalyses 1-hexadecanoyl-2,3-di-(9Z)-octadecenoyl-sn-glycerol + 9-hydroxy-octadecanoate = 9-hexadecanoyloxy-octadecanoate + 2,3-di-(9Z)-octadecenoyl-sn-glycerol. It catalyses the reaction 1,2,3-tri-(10Z)-heptadecenoylglycerol + 9-hydroxy-octadecanoate = 2,3-di-(10Z-heptadecenoyl)-sn-glycerol + 9-(10Z-heptadecenoyloxy)-octadecanoate. It carries out the reaction 1,2,3-tri-(9Z,12Z)-octadecadienoylglycerol + 9-hydroxy-octadecanoate = 2,3-di-(9Z,12Z)-octadecadienoyl-sn-glycerol + 9-(9Z,12Z-octadecadienoyloxy)-octadecanoate. The catalysed reaction is 1,2,3-tri-(9Z)-hexadecenoylglycerol + 9-hydroxy-octadecanoate = 2,3-di-(9Z)-hexadecenoyl-sn-glycerol + 9-(9Z-hexadecenoyloxy)-octadecanoate. The enzyme catalyses 9-hydroxy-octadecanoate + 1,2-di-(9Z-octadecenoyl)-sn-glycerol = 9-(9Z-octadecenoyloxy)-octadecanoate + 2-(9Z-octadecenoyl)-glycerol. It catalyses the reaction 1-hexadecanoyl-2,3-di-(9Z)-octadecenoyl-sn-glycerol + 9-hydroxy-octadecanoate = 1-hexadecanoyl-3-(9Z)-octadecenoyl-sn-glycerol + 9-(9Z-octadecenoyloxy)-octadecanoate. Its pathway is glycerolipid metabolism; triacylglycerol degradation. The triglyceride lipase activity is inhibited by BEL ((E)-6-(bromomethylene)-3-(1-naphthalenyl)-2H-tetrahydropyran-2-one), a suicide substrate inhibitor. No differences in the acylglycerol transacylase was detected in the presence or absence of ATP. Functionally, catalyzes the initial step in triglyceride hydrolysis in adipocyte and non-adipocyte lipid droplets. Exhibits a strong preference for the hydrolysis of long-chain fatty acid esters at the sn-2 position of the glycerol backbone and acts coordinately with LIPE/HLS and DGAT2 within the lipolytic cascade. Also possesses acylglycerol transacylase and phospholipase A2 activities. Transfers fatty acid from triglyceride to retinol, hydrolyzes retinylesters, and generates 1,3-diacylglycerol from triglycerides. Regulates adiposome size and may be involved in the degradation of adiposomes. Catalyzes the formation of an ester bond between hydroxy fatty acids and fatty acids derived from triglycerides or diglycerides to generate fatty acid esters of hydroxy fatty acids (FAHFAs) in adipocytes. Acts antagonistically with LDAH in regulation of cellular lipid stores. Inhibits LDAH-stimulated lipid droplet fusion. May play an important role in energy homeostasis. May play a role in the response of the organism to starvation, enhancing hydrolysis of triglycerides and providing free fatty acids to other tissues to be oxidized in situations of energy depletion. This Homo sapiens (Human) protein is Patatin-like phospholipase domain-containing protein 2.